We begin with the raw amino-acid sequence, 97 residues long: DNA-directed RNA polymerase subunit omega (97 aa).

The protein belongs to the RNA polymerase subunit omega family. The RNAP catalytic core consists of 2 alpha, 1 beta, 1 beta' and 1 omega subunit. When a sigma factor is associated with the core the holoenzyme is formed, which can initiate transcription.

The enzyme catalyses RNA(n) + a ribonucleoside 5'-triphosphate = RNA(n+1) + diphosphate. Functionally, promotes RNA polymerase assembly. Latches the N- and C-terminal regions of the beta' subunit thereby facilitating its interaction with the beta and alpha subunits. This Coxiella burnetii (strain Dugway 5J108-111) protein is DNA-directed RNA polymerase subunit omega.